The following is a 248-amino-acid chain: 2,3-bisphosphoglycerate-dependent phosphoglycerate mutase (248 aa).

Substrate-binding positions include 8–15 (RHGESVWN), 21–22 (TG), Arg-60, 87–90 (ERHY), Lys-98, 114–115 (RR), and 183–184 (GN). The active-site Tele-phosphohistidine intermediate is the His-9. The active-site Proton donor/acceptor is the Glu-87.

Belongs to the phosphoglycerate mutase family. BPG-dependent PGAM subfamily.

The catalysed reaction is (2R)-2-phosphoglycerate = (2R)-3-phosphoglycerate. It participates in carbohydrate degradation; glycolysis; pyruvate from D-glyceraldehyde 3-phosphate: step 3/5. In terms of biological role, catalyzes the interconversion of 2-phosphoglycerate and 3-phosphoglycerate. The protein is 2,3-bisphosphoglycerate-dependent phosphoglycerate mutase of Brachyspira hyodysenteriae (strain ATCC 49526 / WA1).